The following is a 548-amino-acid chain: Membrane protein insertase YidC (548 aa).

Residues 6-26 (NLLVIALLFVSFMIWQAWEQD) form a helical membrane-spanning segment. The disordered stretch occupies residues 28 to 55 (NPQPQAQQTTQTTTTAAGSAADQGVPAS). The span at 30 to 50 (QPQAQQTTQTTTTAAGSAADQ) shows a compositional bias: low complexity. Transmembrane regions (helical) follow at residues 350-370 (FVGN…GIMY), 420-440 (LGGC…YYML), 458-478 (LSAQ…MFFI), and 499-519 (PVIF…YYIV).

Belongs to the OXA1/ALB3/YidC family. Type 1 subfamily. Interacts with the Sec translocase complex via SecD. Specifically interacts with transmembrane segments of nascent integral membrane proteins during membrane integration.

It is found in the cell inner membrane. In terms of biological role, required for the insertion and/or proper folding and/or complex formation of integral membrane proteins into the membrane. Involved in integration of membrane proteins that insert both dependently and independently of the Sec translocase complex, as well as at least some lipoproteins. Aids folding of multispanning membrane proteins. This chain is Membrane protein insertase YidC, found in Escherichia fergusonii (strain ATCC 35469 / DSM 13698 / CCUG 18766 / IAM 14443 / JCM 21226 / LMG 7866 / NBRC 102419 / NCTC 12128 / CDC 0568-73).